The chain runs to 479 residues: RAC-gamma serine/threonine-protein kinase (479 aa).

N-acetylserine is present on S2. In terms of domain architecture, PH spans T5–D107. C59 and C76 are joined by a disulfide. One can recognise a Protein kinase domain in the interval F148 to F405. Residues L154–V162 and K177 contribute to the ATP site. Catalysis depends on D271, which acts as the Proton acceptor. C293 and C307 are disulfide-bonded. An O-linked (GlcNAc) threonine glycan is attached at T302. T305 is subject to Phosphothreonine; by PDPK1. T309 is a glycosylation site (O-linked (GlcNAc) threonine). In terms of domain architecture, AGC-kinase C-terminal spans S406–E479. T447 carries the post-translational modification Phosphothreonine. A disordered region spans residues D458–E479. S472 bears the Phosphoserine; by PKC/PRKCZ mark. S472 is a glycosylation site (O-linked (GlcNAc) serine; alternate).

Belongs to the protein kinase superfamily. AGC Ser/Thr protein kinase family. RAC subfamily. As to quaternary structure, interacts (via PH domain) with TCL1A; this enhances AKT3 phosphorylation and activation. Interacts with TRAF6. Interacts with KCTD20. Interacts with BTBD10. In terms of processing, phosphorylation on Thr-305 and Ser-472 is required for full activity. Phosphorylation of the activation loop at Thr-305 by PDPK1/PDK1 is a prerequisite for full activation. Phosphorylation at Ser-472 by mTORC2 in response to growth factors plays a key role in AKT1 activation by facilitating subsequent phosphorylation of the activation loop by PDPK1/PDK1. Ubiquitinated. When fully phosphorylated and translocated into the nucleus, undergoes 'Lys-48'-polyubiquitination catalyzed by TTC3, leading to its degradation by the proteasome. Post-translationally, O-GlcNAcylation at Thr-302 and Thr-309 inhibits activating phosphorylation at Thr-305 via disrupting the interaction between AKT and PDPK1/PDK1. In adult tissues, it is highly expressed in brain, lung and kidney, but weakly in heart, testis and liver. In fetal tissues, it is highly expressed in heart, liver and brain and not at all in kidney.

It localises to the nucleus. The protein resides in the cytoplasm. The protein localises to the membrane. It catalyses the reaction L-seryl-[protein] + ATP = O-phospho-L-seryl-[protein] + ADP + H(+). The enzyme catalyses L-threonyl-[protein] + ATP = O-phospho-L-threonyl-[protein] + ADP + H(+). Two specific sites, one in the kinase domain (Thr-305) and the other in the C-terminal regulatory region (Ser-472), need to be phosphorylated for its full activation. IGF-1 leads to the activation of AKT3, which may play a role in regulating cell survival. In terms of biological role, AKT3 is one of 3 closely related serine/threonine-protein kinases (AKT1, AKT2 and AKT3) called the AKT kinase, and which regulate many processes including metabolism, proliferation, cell survival, growth and angiogenesis. This is mediated through serine and/or threonine phosphorylation of a range of downstream substrates. Over 100 substrate candidates have been reported so far, but for most of them, no isoform specificity has been reported. AKT3 is the least studied AKT isoform. It plays an important role in brain development and is crucial for the viability of malignant glioma cells. AKT3 isoform may also be the key molecule in up-regulation and down-regulation of MMP13 via IL13. Required for the coordination of mitochondrial biogenesis with growth factor-induced increases in cellular energy demands. Down-regulation by RNA interference reduces the expression of the phosphorylated form of BAD, resulting in the induction of caspase-dependent apoptosis. The chain is RAC-gamma serine/threonine-protein kinase (AKT3) from Homo sapiens (Human).